The chain runs to 349 residues: Holliday junction branch migration complex subunit RuvB (349 aa).

Positions Met1 to Tyr183 are large ATPase domain (RuvB-L). ATP is bound by residues Leu22, Arg23, Gly64, Lys67, Thr68, Thr69, Glu130–Phe132, Arg173, Tyr183, and Arg220. Mg(2+) is bound at residue Thr68. The segment at Thr184–Glu254 is small ATPAse domain (RuvB-S). Residues Ser257–Glu349 form a head domain (RuvB-H) region. Residues Arg293, Arg312, and Arg317 each contribute to the DNA site.

It belongs to the RuvB family. As to quaternary structure, homohexamer. Forms an RuvA(8)-RuvB(12)-Holliday junction (HJ) complex. HJ DNA is sandwiched between 2 RuvA tetramers; dsDNA enters through RuvA and exits via RuvB. An RuvB hexamer assembles on each DNA strand where it exits the tetramer. Each RuvB hexamer is contacted by two RuvA subunits (via domain III) on 2 adjacent RuvB subunits; this complex drives branch migration. In the full resolvosome a probable DNA-RuvA(4)-RuvB(12)-RuvC(2) complex forms which resolves the HJ.

Its subcellular location is the cytoplasm. The enzyme catalyses ATP + H2O = ADP + phosphate + H(+). Functionally, the RuvA-RuvB-RuvC complex processes Holliday junction (HJ) DNA during genetic recombination and DNA repair, while the RuvA-RuvB complex plays an important role in the rescue of blocked DNA replication forks via replication fork reversal (RFR). RuvA specifically binds to HJ cruciform DNA, conferring on it an open structure. The RuvB hexamer acts as an ATP-dependent pump, pulling dsDNA into and through the RuvAB complex. RuvB forms 2 homohexamers on either side of HJ DNA bound by 1 or 2 RuvA tetramers; 4 subunits per hexamer contact DNA at a time. Coordinated motions by a converter formed by DNA-disengaged RuvB subunits stimulates ATP hydrolysis and nucleotide exchange. Immobilization of the converter enables RuvB to convert the ATP-contained energy into a lever motion, pulling 2 nucleotides of DNA out of the RuvA tetramer per ATP hydrolyzed, thus driving DNA branch migration. The RuvB motors rotate together with the DNA substrate, which together with the progressing nucleotide cycle form the mechanistic basis for DNA recombination by continuous HJ branch migration. Branch migration allows RuvC to scan DNA until it finds its consensus sequence, where it cleaves and resolves cruciform DNA. This is Holliday junction branch migration complex subunit RuvB from Rhodopseudomonas palustris (strain TIE-1).